The following is a 109-amino-acid chain: Large ribosomal subunit protein bL31B (109 aa).

Residues 79–109 (NVRQPAQQPQPEEDALPAAKGKKKVVTKKKK) form a disordered region. Residues 98-109 (KGKKKVVTKKKK) show a composition bias toward basic residues.

Belongs to the bacterial ribosomal protein bL31 family. Type B subfamily. Part of the 50S ribosomal subunit.

This Chlamydia pneumoniae (Chlamydophila pneumoniae) protein is Large ribosomal subunit protein bL31B.